The following is a 362-amino-acid chain: Protein RecA (362 aa).

Position 67–74 (67–74 (GPESSGKT)) interacts with ATP. The segment covering 337 to 356 (VADAPADSAPAPVAAVAPKA) has biased composition (low complexity). The disordered stretch occupies residues 337-362 (VADAPADSAPAPVAAVAPKASARKSA).

Belongs to the RecA family.

It localises to the cytoplasm. Its function is as follows. Can catalyze the hydrolysis of ATP in the presence of single-stranded DNA, the ATP-dependent uptake of single-stranded DNA by duplex DNA, and the ATP-dependent hybridization of homologous single-stranded DNAs. It interacts with LexA causing its activation and leading to its autocatalytic cleavage. This is Protein RecA from Clavibacter michiganensis subsp. michiganensis (strain NCPPB 382).